The chain runs to 318 residues: Isoaspartyl peptidase/L-asparaginase (318 aa).

Catalysis depends on Thr180, which acts as the Nucleophile. Substrate-binding positions include 208–211 and 229–232; these read RVSD and TGIG.

The protein belongs to the Ntn-hydrolase family. As to quaternary structure, heterotetramer of two alpha and two beta chains arranged as a dimer of alpha/beta heterodimers. Cleaved into an alpha and beta chain by autocatalysis; this activates the enzyme. The N-terminal residue of the beta subunit is responsible for the nucleophile hydrolase activity.

The enzyme catalyses Cleavage of a beta-linked Asp residue from the N-terminus of a polypeptide.. Its function is as follows. Degrades proteins damaged by L-isoaspartyl residue formation (also known as beta-Asp residues). Probably performs the final step in the degradation of the reserve polymer cyanophycin (depolymerizes the building block L-beta-Asp-Arg). Also has L-asparaginase activity. This chain is Isoaspartyl peptidase/L-asparaginase, found in Nostoc sp. (strain PCC 7120 / SAG 25.82 / UTEX 2576).